The sequence spans 183 residues: Ribulose bisphosphate carboxylase small subunit, chloroplastic 3 (183 aa).

A chloroplast-targeting transit peptide spans Met-1 to Asp-43.

The protein belongs to the RuBisCO small chain family. In terms of assembly, heterohexadecamer of 8 large and 8 small subunits.

It localises to the plastid. The protein localises to the chloroplast. RuBisCO catalyzes two reactions: the carboxylation of D-ribulose 1,5-bisphosphate, the primary event in carbon dioxide fixation, as well as the oxidative fragmentation of the pentose substrate. Both reactions occur simultaneously and in competition at the same active site. Although the small subunit is not catalytic it is essential for maximal activity. This chain is Ribulose bisphosphate carboxylase small subunit, chloroplastic 3, found in Acetabularia peniculus (Green alga).